The sequence spans 103 residues: Vesicle-associated membrane protein 3 (103 aa).

The disordered stretch occupies residues M1–Q25. The Cytoplasmic portion of the chain corresponds to M1–K81. In terms of domain architecture, v-SNARE coiled-coil homology spans R18–K78. Glycyl lysine isopeptide (Lys-Gly) (interchain with G-Cter in ubiquitin) cross-links involve residues K70, K72, and K81. The helical; Anchor for type IV membrane protein transmembrane segment at M82–V102 threads the bilayer. A topological domain (vesicular) is located at residue S103.

Belongs to the synaptobrevin family. Interacts with POPDC1 (via the C-terminus cytoplasmic tail). Interacts with BCAP31; involved in VAMP3 export from the endoplasmic reticulum. Interacts with BAIAP3; this interaction is increased in the presence of calcium. Interacts with PICALM. Post-translationally, ubiquitinated by RNF167 at Lys-70, Lys-72 and Lys-81, regulating the recycling endosome pathway. (Microbial infection) Targeted and hydrolyzed by C.botulinum neurotoxin type D (BoNT/D, botD) which hydrolyzes the 46-Lys-|-Leu-47 bond and probably inhibits neurotransmitter release. In terms of processing, (Microbial infection) Targeted and hydrolyzed by C.botulinum neurotoxin type F (BoNT/F, botF) which hydrolyzes the 45-Gln-|-Lys-46 bond and probably inhibits neurotransmitter release. Post-translationally, (Microbial infection) Targeted and hydrolyzed by C.tetani toxin (tetX) which hydrolyzes the 63-Gln-|-Phe-64 bond and probably inhibits neurotransmitter release. In terms of tissue distribution, ubiquitous.

The protein resides in the early endosome membrane. It localises to the recycling endosome membrane. Its subcellular location is the synapse. It is found in the synaptosome. Functionally, SNARE involved in vesicular transport from the late endosomes to the trans-Golgi network. This Rattus norvegicus (Rat) protein is Vesicle-associated membrane protein 3 (Vamp3).